The chain runs to 309 residues: Homoserine kinase (309 aa).

95-105 (PHGRGLGSSSA) contributes to the ATP binding site.

Belongs to the GHMP kinase family. Homoserine kinase subfamily.

It is found in the cytoplasm. The enzyme catalyses L-homoserine + ATP = O-phospho-L-homoserine + ADP + H(+). Its pathway is amino-acid biosynthesis; L-threonine biosynthesis; L-threonine from L-aspartate: step 4/5. Its function is as follows. Catalyzes the ATP-dependent phosphorylation of L-homoserine to L-homoserine phosphate. The polypeptide is Homoserine kinase (Streptomyces coelicolor (strain ATCC BAA-471 / A3(2) / M145)).